The chain runs to 135 residues: Large ribosomal subunit protein uL16c (135 aa).

Belongs to the universal ribosomal protein uL16 family. In terms of assembly, part of the 50S ribosomal subunit.

It localises to the plastid. It is found in the chloroplast. The chain is Large ribosomal subunit protein uL16c from Panax ginseng (Korean ginseng).